The sequence spans 590 residues: Tape measure protein (590 aa).

Disordered regions lie at residues 1–35 (MKKP…LSGL), 147–185 (ESVG…EEKQ), and 515–535 (LKKN…EAKQ). Residues 176 to 185 (PKQESPEEKQ) show a composition bias toward basic and acidic residues.

Its subcellular location is the virion. Functionally, serves as a base for tail tube protein polymerization and acts as a template for tail length determination. This Escherichia coli (Bacteriophage T4) protein is Tape measure protein (29).